A 691-amino-acid polypeptide reads, in one-letter code: Elongation factor G (691 aa).

The tr-type G domain maps to 8-282 (ERVRNIGIAA…AVVDYLPAPV (275 aa)). GTP is bound by residues 17–24 (AHIDAGKT), 81–85 (DTPGH), and 135–138 (NKMD).

This sequence belongs to the TRAFAC class translation factor GTPase superfamily. Classic translation factor GTPase family. EF-G/EF-2 subfamily.

Its subcellular location is the cytoplasm. In terms of biological role, catalyzes the GTP-dependent ribosomal translocation step during translation elongation. During this step, the ribosome changes from the pre-translocational (PRE) to the post-translocational (POST) state as the newly formed A-site-bound peptidyl-tRNA and P-site-bound deacylated tRNA move to the P and E sites, respectively. Catalyzes the coordinated movement of the two tRNA molecules, the mRNA and conformational changes in the ribosome. The sequence is that of Elongation factor G from Prochlorococcus marinus (strain MIT 9303).